A 162-amino-acid polypeptide reads, in one-letter code: Succinate dehydrogenase assembly factor 2-A, mitochondrial (162 aa).

Residues 1 to 23 (MLRQLRLTMDISGWIFLPWRRSM) constitute a mitochondrion transit peptide.

Belongs to the SDHAF2 family. In terms of assembly, interacts with the flavoprotein subunit within the SDH catalytic dimer.

The protein resides in the mitochondrion matrix. Functionally, plays an essential role in the assembly of succinate dehydrogenase (SDH), an enzyme complex (also referred to as respiratory complex II) that is a component of both the tricarboxylic acid (TCA) cycle and the mitochondrial electron transport chain, and which couples the oxidation of succinate to fumarate with the reduction of ubiquinone (coenzyme Q) to ubiquinol. Required for flavinylation (covalent attachment of FAD) of the flavoprotein subunit of the SDH catalytic dimer. The protein is Succinate dehydrogenase assembly factor 2-A, mitochondrial of Drosophila erecta (Fruit fly).